The following is a 213-amino-acid chain: Kynurenine formamidase (213 aa).

Residue Trp-18 coordinates substrate. Zn(2+) is bound by residues His-48, His-52, and Asp-54. The active-site Proton donor/acceptor is the His-58. Residues His-160 and Glu-172 each contribute to the Zn(2+) site.

The protein belongs to the Cyclase 1 superfamily. KynB family. As to quaternary structure, homodimer. The cofactor is Zn(2+).

The enzyme catalyses N-formyl-L-kynurenine + H2O = L-kynurenine + formate + H(+). The protein operates within amino-acid degradation; L-tryptophan degradation via kynurenine pathway; L-kynurenine from L-tryptophan: step 2/2. Functionally, catalyzes the hydrolysis of N-formyl-L-kynurenine to L-kynurenine, the second step in the kynurenine pathway of tryptophan degradation. This chain is Kynurenine formamidase, found in Burkholderia orbicola (strain MC0-3).